A 331-amino-acid polypeptide reads, in one-letter code: 6-phosphogluconolactonase (331 aa).

The residue at position 287 (Lys287) is an N6-acetyllysine.

This sequence belongs to the cycloisomerase 2 family.

The enzyme catalyses 6-phospho-D-glucono-1,5-lactone + H2O = 6-phospho-D-gluconate + H(+). It functions in the pathway carbohydrate degradation; pentose phosphate pathway; D-ribulose 5-phosphate from D-glucose 6-phosphate (oxidative stage): step 2/3. Its function is as follows. Catalyzes the hydrolysis of 6-phosphogluconolactone to 6-phosphogluconate. This chain is 6-phosphogluconolactonase, found in Escherichia coli O139:H28 (strain E24377A / ETEC).